A 915-amino-acid polypeptide reads, in one-letter code: Protein ZDS1 (915 aa).

Disordered regions lie at residues 1-28 (MSNRDNESMLRTTSSDKAIASQRDKRKS), 69-134 (GESS…KKGV), 179-261 (LSDN…SETV), 310-330 (GSYSDKKDQPQPEGHYDEGDI), 412-433 (KSPFRQQDEDSENMSSPGSIGD), and 464-807 (KVRN…SILP). Over residues 74–93 (RRSWSGTTSSSASMPSDTTT) the composition is skewed to low complexity. Residues 115–125 (GIESSNKTKQG) are compositionally biased toward polar residues. The segment covering 202–212 (DKESQSYENKE) has biased composition (basic and acidic residues). A Phosphoserine modification is found at S229. Residues 243-252 (EFDDNEDDDN) show a composition bias toward acidic residues. Basic and acidic residues predominate over residues 313 to 327 (SDKKDQPQPEGHYDE). Residues 464–480 (KVRNDTVEQDLELREGT) are compositionally biased toward basic and acidic residues. The segment covering 515 to 530 (DDNEENQGDDENEENV) has biased composition (acidic residues). 2 stretches are compositionally biased toward basic and acidic residues: residues 531-541 (DSQRMELDNSK) and 552-562 (EKTEVSNKEEM). 2 stretches are compositionally biased toward low complexity: residues 565-574 (SSTSTATSQT) and 597-609 (SSSPSSSPSSSPS). Composition is skewed to basic residues over residues 618–627 (VRVRKSKKLG) and 642–656 (NRPRPHRHHHSRHGS). The span at 668-679 (QPQQQIPLQPQL) shows a compositional bias: low complexity. A compositionally biased stretch (polar residues) spans 696–710 (LPQLQPAVSVSSTKS). Composition is skewed to basic and acidic residues over residues 711 to 721 (NSRDREEEEAK) and 742 to 751 (VQKENTDEQK). Residues 752–793 (AQLQAPAQEQVQTSVPVQASAPVQNSAPVQTSAPVEASAQTQ) are compositionally biased toward polar residues.

This sequence to yeast ZDS2/MCS1. In terms of assembly, interacts with BCY1, DBP5, GFD1 and SKG6.

The protein localises to the cytoplasm. Has a role in establishing cell polarity. Together with cAMP-dependent protein kinase regulatory subunit BCY1, provides a negative feedback control on the cell wall integrity-signaling pathway by acting as a negative regulator of MAP kinase SLT2/MPK1. In heat-stressed cells appears to play a role in localizing BCY1 to the cytoplasm. Seems to interact with, and down-regulate, CDC42. Also acts as a suppressor of PKC1. May act as an integration point for distinct signaling pathways helping to maintain a balance among these different pathways. Functionally, when associated with DBP5, GFD1 and nucleoporins at the cytosolic fibrils of the nuclear pore complex, is required for mRNA export form the nucleus. This chain is Protein ZDS1 (ZDS1), found in Saccharomyces cerevisiae (strain ATCC 204508 / S288c) (Baker's yeast).